A 266-amino-acid chain; its full sequence is METFQIILLALIQGLTEFLPISSSAHLILPSQLLGWKDQGFSFDVAVNTGSLLAVVIYFRHDLWTMAKAWVLSLVKGEQSNESKLAWWIILATIPAVIFGFAAKDFIATHLRNTTVIASTTIIFGLLLWWADRMSRSELTVYQTGWRKALLIGFAQALAIIPGTSRSGATMTAALMLGLSREAAAKFSFLMSVPVGLGAAILVTKDLVESPEAIDYQALGIGMLVSFLAAYACIYYFLKYISRMGMTPFVIYRLILGSVLFALILW.

8 helical membrane-spanning segments follow: residues 1–21, 39–59, 87–107, 111–131, 149–169, 183–203, 218–238, and 246–266; these read METF…FLPI, QGFS…VIYF, WWII…KDFI, LRNT…LWWA, ALLI…RSGA, AAAK…AILV, ALGI…YYFL, and MTPF…LILW.

This sequence belongs to the UppP family.

It localises to the cell inner membrane. It carries out the reaction di-trans,octa-cis-undecaprenyl diphosphate + H2O = di-trans,octa-cis-undecaprenyl phosphate + phosphate + H(+). Functionally, catalyzes the dephosphorylation of undecaprenyl diphosphate (UPP). Confers resistance to bacitracin. This Shewanella denitrificans (strain OS217 / ATCC BAA-1090 / DSM 15013) protein is Undecaprenyl-diphosphatase.